Consider the following 67-residue polypeptide: Small ribosomal subunit protein bS21 (67 aa).

The span at 37 to 52 shows a compositional bias: basic and acidic residues; the sequence is EKPSERKAREAAEAVR. Residues 37-67 are disordered; sequence EKPSERKAREAAEAVRRARKMERKRLEREGF.

It belongs to the bacterial ribosomal protein bS21 family.

The protein is Small ribosomal subunit protein bS21 of Gluconacetobacter diazotrophicus (strain ATCC 49037 / DSM 5601 / CCUG 37298 / CIP 103539 / LMG 7603 / PAl5).